A 461-amino-acid polypeptide reads, in one-letter code: uncharacterized protein (461 aa).

Residues 86–127 form a disordered region; that stretch reads KMKPNKDDDEEEDEDDEDDEDDEEEDNEEEDNEEENEITIAP. Residues 92–122 are compositionally biased toward acidic residues; it reads DDDEEEDEDDEDDEDDEEEDNEEEDNEEENE. Coiled-coil stretches lie at residues 95 to 123 and 405 to 459; these read EEED…ENEI and NKYI…KLKK.

Belongs to the mimivirus L5 family.

This is an uncharacterized protein from Acanthamoeba polyphaga mimivirus (APMV).